The primary structure comprises 407 residues: Protoasukamycin 4-monooxygenase (407 aa).

In terms of assembly, does not interact with AsuE2, suggesting a possible transient interaction between the two enzymes instead of formation of a stable complex. The cofactor is FMN. It depends on FAD as a cofactor. Riboflavin is required as a cofactor.

It catalyses the reaction protoasukamycin + NADH + O2 + H(+) = 4-hydroxyprotoasukamycin + NAD(+) + H2O. It participates in antibiotic biosynthesis. When flavin concentration is low, activity is enhanced by the presence of the NADH-dependent flavin reductase AsuE2. In the presence of abundant flavin, activity of AsuE1 is not affected by AsuE2. Functionally, involved in the biosynthesis of the antibiotic asukamycin. Catalyzes the conversion of protoasukamycin to 4-hydroxyprotoasukamycin. Can also convert some protoasukamycin derivatives into their corresponding 4-hydroxyprotoasukamycin derivatives. Can also use NADPH, but catalytic efficiency is 50-fold higher with NADH. This Streptomyces nodosus subsp. asukaensis protein is Protoasukamycin 4-monooxygenase.